Here is a 348-residue protein sequence, read N- to C-terminus: tRNA-specific 2-thiouridylase MnmA (348 aa).

ATP is bound by residues 8–15 and Met34; that span reads LLSGGVDS. Catalysis depends on Cys105, which acts as the Nucleophile. Cys105 and Cys197 are oxidised to a cystine. Position 129 (Gly129) interacts with ATP. The segment at 147–149 is interaction with tRNA; it reads KDQ. Cys197 serves as the catalytic Cysteine persulfide intermediate.

The protein belongs to the MnmA/TRMU family.

The protein localises to the cytoplasm. The enzyme catalyses S-sulfanyl-L-cysteinyl-[protein] + uridine(34) in tRNA + AH2 + ATP = 2-thiouridine(34) in tRNA + L-cysteinyl-[protein] + A + AMP + diphosphate + H(+). Functionally, catalyzes the 2-thiolation of uridine at the wobble position (U34) of tRNA, leading to the formation of s(2)U34. This chain is tRNA-specific 2-thiouridylase MnmA, found in Fervidobacterium nodosum (strain ATCC 35602 / DSM 5306 / Rt17-B1).